Consider the following 380-residue polypeptide: MVQPRPAAPTVKFVDEYCQWYKSLFPDVRSFEAFKYLHVGCISDLKRKTLPEIAKIVGLDNQQGLHHFLTTSPWDIEKLRTLRLELILQVLKGRPIILIIDETGDKKKGSKTDYVKRQYIGNLGKTDNGIVAVTVYGVFCGMTFPLLFEVYKPRERLQAGDKYRTKPEIAAILIKKLQSMGFKFNLVLADSLYGESGKNFISVLDELNLNYIVAIRSNHYVEILPRQHIQYLKWQKFQRVFSDLSRENRFIREIIPGKRGELRYWQITTDPENLPDNTTWYVMSKYPDITPREVGNFYGLRTWVEYGLKQSKNELGWSDFRLTHYPDIEAMVGNYLQCLFNGVCIRSNCFSLHHNESQNLFHILGGIMEMAGRTFLTIFV.

Functionally, involved in the transposition of the insertion sequence. The chain is Probable transposase for insertion sequence element IS701 from Microchaete diplosiphon (Fremyella diplosiphon).